A 248-amino-acid chain; its full sequence is Adenosylcobinamide-GDP ribazoletransferase (248 aa).

Transmembrane regions (helical) follow at residues 24–44 (EVNL…IGAW), 47–67 (LVFT…AGLF), 70–90 (IIIT…GLFS), 106–126 (VGAN…ALFL), 134–154 (IGWL…LLFA), 165–185 (LGSI…LFVL), 186–206 (FILG…VILF), and 228–248 (AGGQ…WGLI).

The protein belongs to the CobS family. Mg(2+) is required as a cofactor.

It is found in the cell membrane. It carries out the reaction alpha-ribazole + adenosylcob(III)inamide-GDP = adenosylcob(III)alamin + GMP + H(+). The catalysed reaction is alpha-ribazole 5'-phosphate + adenosylcob(III)inamide-GDP = adenosylcob(III)alamin 5'-phosphate + GMP + H(+). Its pathway is cofactor biosynthesis; adenosylcobalamin biosynthesis; adenosylcobalamin from cob(II)yrinate a,c-diamide: step 7/7. Functionally, joins adenosylcobinamide-GDP and alpha-ribazole to generate adenosylcobalamin (Ado-cobalamin). Also synthesizes adenosylcobalamin 5'-phosphate from adenosylcobinamide-GDP and alpha-ribazole 5'-phosphate. The chain is Adenosylcobinamide-GDP ribazoletransferase from Listeria welshimeri serovar 6b (strain ATCC 35897 / DSM 20650 / CCUG 15529 / CIP 8149 / NCTC 11857 / SLCC 5334 / V8).